The sequence spans 54 residues: UPF0434 protein BCI_0256 (54 aa).

This sequence belongs to the UPF0434 family.

The sequence is that of UPF0434 protein BCI_0256 from Baumannia cicadellinicola subsp. Homalodisca coagulata.